Consider the following 384-residue polypeptide: S-adenosylmethionine synthase (384 aa).

H15 provides a ligand contact to ATP. D17 contributes to the Mg(2+) binding site. E43 serves as a coordination point for K(+). L-methionine contacts are provided by E56 and Q99. The flexible loop stretch occupies residues 99–109; sequence QSPDINQGVDR. Residues 164-166, 230-231, D239, 245-246, A262, and K266 each bind ATP; these read DAK, RF, and RK. D239 is a binding site for L-methionine. K270 contacts L-methionine.

Belongs to the AdoMet synthase family. As to quaternary structure, homotetramer; dimer of dimers. It depends on Mg(2+) as a cofactor. K(+) is required as a cofactor.

Its subcellular location is the cytoplasm. It carries out the reaction L-methionine + ATP + H2O = S-adenosyl-L-methionine + phosphate + diphosphate. Its pathway is amino-acid biosynthesis; S-adenosyl-L-methionine biosynthesis; S-adenosyl-L-methionine from L-methionine: step 1/1. In terms of biological role, catalyzes the formation of S-adenosylmethionine (AdoMet) from methionine and ATP. The overall synthetic reaction is composed of two sequential steps, AdoMet formation and the subsequent tripolyphosphate hydrolysis which occurs prior to release of AdoMet from the enzyme. This is S-adenosylmethionine synthase from Salmonella agona (strain SL483).